Reading from the N-terminus, the 206-residue chain is Alpha-amylase/trypsin inhibitor (206 aa).

Disulfide bonds link Cys-9-Cys-205, Cys-51-Cys-61, Cys-66-Cys-72, Cys-118-Cys-194, Cys-124-Cys-177, Cys-132-Cys-142, Cys-146-Cys-155, and Cys-156-Cys-164.

This sequence belongs to the thaumatin family.

Functionally, inhibits both trypsin and alpha-amylase. Inhibits the growth of some plant fungal pathogens. In Zea mays (Maize), this protein is Alpha-amylase/trypsin inhibitor.